The chain runs to 394 residues: MGREPEMEEARENGGVGGSVLPLASLISPTGNEVQISELEGKIIGLYFAANWYPKCEAFTPALTAAYHQLKEHGAGFEVIFVSCDENRPSFERFHRAMPWPAVPFGDIGCKKRLSERFQVEGIPRLVVLAPNGEVVQPDAVELVHRYGDRAFPFTSARVAELEADEQRKFASQTLEKIFSVSGKDYVNGSQEQVPISSLVGKTVGLYFSAHRCAPCIKFTAKLAAIYSNLKGKAEDFEIIYIPMDKEEDGYLRSCSDMPWLALPYDDGASSGALARYFDVREIPTLVVVGPDGKTVTREGRNLVNLYFDMAFPFTDEQIRLLQEMEDEDAKGYPPSLRHTGHRHELSIVSDKSGGGPYICCECDEQGLGWAYQCIACGYEIHLRCGRDMEGRAE.

Thioredoxin domains follow at residues 15–176 and 180–327; these read GVGG…QTLE and SVSG…EMED.

Belongs to the nucleoredoxin family.

It carries out the reaction [protein]-dithiol + NAD(+) = [protein]-disulfide + NADH + H(+). The catalysed reaction is [protein]-dithiol + NADP(+) = [protein]-disulfide + NADPH + H(+). Functionally, probable thiol-disulfide oxidoreductase that may participate in various redox reactions. In Oryza sativa subsp. japonica (Rice), this protein is Probable nucleoredoxin 2.